The sequence spans 118 residues: Myotrophin (118 aa).

ANK repeat units lie at residues 1 to 30 (MGDK…DVNR), 34 to 65 (GGRK…NAPD), and 67 to 98 (HGIT…NRKG).

The protein belongs to the myotrophin family.

The protein resides in the cytoplasm. Its subcellular location is the nucleus. The protein localises to the perinuclear region. Functionally, regulates NF-kappa-B transcription factor activity. Promotes growth of cardiomyocytes, but not cardiomyocyte proliferation. Promotes cardiac muscle hypertrophy. Plays a role in the regulation of the growth of actin filaments. Inhibits the activity of the F-actin-capping protein complex. This is Myotrophin (mtpn) from Danio rerio (Zebrafish).